The chain runs to 492 residues: Probable serine/threonine-protein kinase WNK9 (492 aa).

In terms of domain architecture, Protein kinase spans glycine 25–leucine 282. ATP-binding positions include threonine 105–phenylalanine 108 and lysine 155. Aspartate 172 serves as the catalytic Proton acceptor.

It belongs to the protein kinase superfamily. Ser/Thr protein kinase family. WNK subfamily.

The enzyme catalyses L-seryl-[protein] + ATP = O-phospho-L-seryl-[protein] + ADP + H(+). It catalyses the reaction L-threonyl-[protein] + ATP = O-phospho-L-threonyl-[protein] + ADP + H(+). In terms of biological role, may regulate flowering time by modulating the photoperiod pathway. The protein is Probable serine/threonine-protein kinase WNK9 (WNK9) of Arabidopsis thaliana (Mouse-ear cress).